The following is a 444-amino-acid chain: tRNA-2-methylthio-N(6)-dimethylallyladenosine synthase (444 aa).

The MTTase N-terminal domain maps to 3–117 (RGLYIESYGC…LPELIMKVKR (115 aa)). [4Fe-4S] cluster-binding residues include Cys-12, Cys-48, Cys-80, Cys-155, Cys-159, and Cys-162. A Radical SAM core domain is found at 141 to 374 (ANGGVSAYVS…LLTKQQLQFN (234 aa)). In terms of domain architecture, TRAM spans 375–441 (KSMEGRVMDV…QNSLEGTVLS (67 aa)).

The protein belongs to the methylthiotransferase family. MiaB subfamily. Monomer. It depends on [4Fe-4S] cluster as a cofactor.

It is found in the cytoplasm. It catalyses the reaction N(6)-dimethylallyladenosine(37) in tRNA + (sulfur carrier)-SH + AH2 + 2 S-adenosyl-L-methionine = 2-methylsulfanyl-N(6)-dimethylallyladenosine(37) in tRNA + (sulfur carrier)-H + 5'-deoxyadenosine + L-methionine + A + S-adenosyl-L-homocysteine + 2 H(+). In terms of biological role, catalyzes the methylthiolation of N6-(dimethylallyl)adenosine (i(6)A), leading to the formation of 2-methylthio-N6-(dimethylallyl)adenosine (ms(2)i(6)A) at position 37 in tRNAs that read codons beginning with uridine. The protein is tRNA-2-methylthio-N(6)-dimethylallyladenosine synthase of Anaplasma phagocytophilum (strain HZ).